Reading from the N-terminus, the 105-residue chain is Large ribosomal subunit protein uL24 (105 aa).

The protein belongs to the universal ribosomal protein uL24 family. Part of the 50S ribosomal subunit.

Functionally, one of two assembly initiator proteins, it binds directly to the 5'-end of the 23S rRNA, where it nucleates assembly of the 50S subunit. In terms of biological role, one of the proteins that surrounds the polypeptide exit tunnel on the outside of the subunit. The polypeptide is Large ribosomal subunit protein uL24 (Aliivibrio salmonicida (strain LFI1238) (Vibrio salmonicida (strain LFI1238))).